Reading from the N-terminus, the 433-residue chain is Trigger factor (433 aa).

Residues 161–246 (EDRVVIDFVG…LKKVENIVLP (86 aa)) enclose the PPIase FKBP-type domain.

This sequence belongs to the FKBP-type PPIase family. Tig subfamily.

It is found in the cytoplasm. The enzyme catalyses [protein]-peptidylproline (omega=180) = [protein]-peptidylproline (omega=0). Involved in protein export. Acts as a chaperone by maintaining the newly synthesized protein in an open conformation. Functions as a peptidyl-prolyl cis-trans isomerase. In Actinobacillus pleuropneumoniae serotype 7 (strain AP76), this protein is Trigger factor.